The chain runs to 601 residues: Kelch repeat and BTB domain-containing protein 8 (601 aa).

The interval 1-25 (MAASADLSKSSPTPNGIPSSDPASD) is disordered. The span at 7–22 (LSKSSPTPNGIPSSDP) shows a compositional bias: polar residues. Positions 49-117 (TDIVVEVDHG…AYTSRVILTE (69 aa)) constitute a BTB domain. Residues 153 to 252 (IGVFIFADHY…PLMEDTFIEK (100 aa)) form the BACK domain. Kelch repeat units lie at residues 336-390 (DIYI…YCCG), 391-441 (KMYA…EYKE), 443-481 (IYVLQGEFFLFYEPQKDYWGFLTPMTVPRIQGLAAVYKD), 483-532 (IYYI…LFQN), and 542-588 (QVTV…FECA).

Belongs to the KBTBD8 family. Component of the BCR(KBTBD8) E3 ubiquitin ligase complex, at least composed of CUL3, KBTBD8 and RBX1.

The protein localises to the cytoplasm. Its subcellular location is the cytoskeleton. It localises to the spindle. It is found in the golgi apparatus. In terms of biological role, substrate-specific adapter of a BCR (BTB-CUL3-RBX1) E3 ubiquitin ligase complex that acts as a regulator of neural crest specification. The BCR(KBTBD8) complex acts by mediating monoubiquitination of NOLC1 and TCOF1: monoubiquitination promotes the formation of a NOLC1-TCOF1 complex that acts as a platform to connect RNA polymerase I with enzymes responsible for ribosomal processing and modification, leading to remodel the translational program of differentiating cells in favor of neural crest specification. This chain is Kelch repeat and BTB domain-containing protein 8 (KBTBD8), found in Homo sapiens (Human).